Reading from the N-terminus, the 123-residue chain is Small ribosomal subunit protein uS12cz/uS12cy (123 aa).

The protein belongs to the universal ribosomal protein uS12 family. Part of the 30S ribosomal subunit.

Its subcellular location is the plastid. It is found in the chloroplast. Its function is as follows. With S4 and S5 plays an important role in translational accuracy. Located at the interface of the 30S and 50S subunits. This is Small ribosomal subunit protein uS12cz/uS12cy (rps12-A) from Populus alba (White poplar).